The sequence spans 530 residues: MFS transporter PfmaC (530 aa).

A disordered region spans residues 41 to 76 (TTAVSDGDNQSSTMSGKTAAGDATSPASGSGSGGWF). Positions 42 to 56 (TAVSDGDNQSSTMSG) are enriched in polar residues. Residues 59–69 (AAGDATSPASG) show a composition bias toward low complexity. Helical transmembrane passes span 165-182 (YWLP…LGMY), 195-215 (FFIG…LGCW), 226-246 (ALFV…QAAL), 261-281 (WLFI…LFCF), 324-344 (IFTS…SLTV), 369-389 (NIPT…GFVS), 396-416 (GPVC…FTAW), 422-442 (LLMA…LLAG), 456-476 (AFIL…FQQL), and 493-513 (PSAL…IPLL).

Belongs to the major facilitator superfamily. Allantoate permease family.

It localises to the cell membrane. Functionally, MFS transporter; part of the gene cluster that mediates the biosynthesis of dihydroxynaphthalene (DHN)-melanin, a bluish-green pigment forming a dark layer in the conidial wall that protects the conidia from UV radiations. In Pestalotiopsis fici (strain W106-1 / CGMCC3.15140), this protein is MFS transporter PfmaC.